Reading from the N-terminus, the 266-residue chain is Methyl-coenzyme M reductase II subunit gamma (266 aa).

R123 contributes to the coenzyme M binding site.

It belongs to the methyl-coenzyme M reductase gamma subunit family. As to quaternary structure, MCR is a hexamer of two alpha, two beta, and two gamma chains, forming a dimer of heterotrimers. Coenzyme F430 is required as a cofactor.

The enzyme catalyses coenzyme B + methyl-coenzyme M = methane + coenzyme M-coenzyme B heterodisulfide. It functions in the pathway one-carbon metabolism; methyl-coenzyme M reduction; methane from methyl-coenzyme M: step 1/1. Functionally, component of the methyl-coenzyme M reductase (MCR) I that catalyzes the reductive cleavage of methyl-coenzyme M (CoM-S-CH3 or 2-(methylthio)ethanesulfonate) using coenzyme B (CoB or 7-mercaptoheptanoylthreonine phosphate) as reductant which results in the production of methane and the mixed heterodisulfide of CoB and CoM (CoM-S-S-CoB). This is the final step in methanogenesis. In Methanocaldococcus jannaschii (strain ATCC 43067 / DSM 2661 / JAL-1 / JCM 10045 / NBRC 100440) (Methanococcus jannaschii), this protein is Methyl-coenzyme M reductase II subunit gamma (mrtG).